The chain runs to 217 residues: MQDTTLHIRHLGQQDYESVWHAMQHYTDTRNSDSPDELWIVEHPPVFTQGQAGKSEHILNPGDIPVIQVDRGGQVTYHGPGQLVVYPLLDIKRSKIGVRQLVTHIEQSIIDMLAKYDINAYAKADAPGVYVDQRKVASLGLRIRKGCSFHGLALNVDMDLAPFRRINPCGYAGLEMVQCKELGGPQTVIEAGDQLIITLSQLLGYQQLVHHQGLAAS.

The BPL/LPL catalytic domain maps to 32 to 207 (SDSPDELWIV…TLSQLLGYQQ (176 aa)). Residues 71–78 (RGGQVTYH), 138–140 (SLG), and 151–153 (GLA) each bind substrate. The Acyl-thioester intermediate role is filled by C169.

This sequence belongs to the LipB family.

The protein resides in the cytoplasm. The enzyme catalyses octanoyl-[ACP] + L-lysyl-[protein] = N(6)-octanoyl-L-lysyl-[protein] + holo-[ACP] + H(+). It participates in protein modification; protein lipoylation via endogenous pathway; protein N(6)-(lipoyl)lysine from octanoyl-[acyl-carrier-protein]: step 1/2. Catalyzes the transfer of endogenously produced octanoic acid from octanoyl-acyl-carrier-protein onto the lipoyl domains of lipoate-dependent enzymes. Lipoyl-ACP can also act as a substrate although octanoyl-ACP is likely to be the physiological substrate. The chain is Octanoyltransferase from Shewanella sp. (strain ANA-3).